A 250-amino-acid chain; its full sequence is N-acetylmuramoyl-L-alanine amidase CwlH (250 aa).

Residues 1 to 44 (MVTIKKDFIPVSNDNRPGYAMAPAYITVHNTANTAKGADAKMHA) form the signal peptide. An N-acetylmuramoyl-L-alanine amidase domain is found at 45–141 (KFVKNPNTSE…KKWSGKECPR (97 aa)).

The protein belongs to the N-acetylmuramoyl-L-alanine amidase 2 family.

It localises to the secreted. The catalysed reaction is Hydrolyzes the link between N-acetylmuramoyl residues and L-amino acid residues in certain cell-wall glycopeptides.. In terms of biological role, autolysins are involved in some important biological processes such as cell separation, cell-wall turnover, competence for genetic transformation, formation of the flagella and sporulation. Could play a role in mother cell lysis with CwlC. The protein is N-acetylmuramoyl-L-alanine amidase CwlH (cwlH) of Bacillus subtilis (strain 168).